Consider the following 661-residue polypeptide: MWHLLVWIILLATAQQMITEGCPAGCQCNTPQTVFCLARKNSNFPRSVPPDTLNLYVFENGISSIEESSFIGLNGLHLLDLSHNQLSSLPGGVFRNLANLSNLDLTSNQLTEISADTFQGLSRLERLYLNGNRIRSIHPEAFKGIESLLELKLSNNQLVTPPAFSLPHLLLLDLSYNAIPVIQQGVFNAGNIESLRLAGLGLKEVPEELLSGLKNLHELDLSDNQLDKVPPGLHGLTKLNIAGNVGFSQIQVDDLSNLPALQELDLSGLSLQTLPKGLFRSSKRLRAVSLAQNPFNCVCSLGWLSEWMRVSGVVLLRPDETRCHFPPKNAGKTLRQLRDSEYGCPAPTTIQMPSTMPPSTTTGPPTTTKHLQTEAPTTASTTTTTIPHQEQEEDTQPFQFDFEDTLCPPQTCLNGGSCHLDPTGQLECECPPGFQGTYCETGPVTPAVVTEMYIEQVKIIEVTVSSIRVDLQSYSQNKEKLRAIRLTVRNLYGADRRPMIYKLPPTLPEYTVRALSSNSSYWVCLGSQGEGGPEEDLCTETHTLGEPPKHSPQVTQSQEGNLTLVLVPAVAAGILLSAAVAAAACYARRRKGKGHSVEDGGPLEMDGVKKGLDGKGEVKKLSEDPTGPEKTGAESEEPLMDSTRIGNNNDAPTGRLPHSYF.

The first 19 residues, 1–19, serve as a signal peptide directing secretion; that stretch reads MWHLLVWIILLATAQQMIT. The LRRNT domain maps to 20–50; the sequence is EGCPAGCQCNTPQTVFCLARKNSNFPRSVPP. Topologically, residues 20–563 are extracellular; sequence EGCPAGCQCN…VTQSQEGNLT (544 aa). LRR repeat units lie at residues 52 to 72, 75 to 96, 99 to 120, 123 to 144, 147 to 168, 169 to 189, 191 to 212, 215 to 237, 238 to 258, and 259 to 281; these read TLNL…SFIG, GLHL…VFRN, NLSN…TFQG, RLER…AFKG, SLLE…SLPH, LLLL…VFNA, NIES…LLSG, NLHE…HGLT, KLNI…LSNL, and PALQ…LFRS. N-linked (GlcNAc...) asparagine glycosylation occurs at Asn99. Positions 293 to 346 constitute an LRRCT domain; the sequence is NPFNCVCSLGWLSEWMRVSGVVLLRPDETRCHFPPKNAGKTLRQLRDSEYGCPA. Residues 348–385 show a composition bias toward low complexity; sequence TTIQMPSTMPPSTTTGPPTTTKHLQTEAPTTASTTTTT. The segment at 348–395 is disordered; it reads TTIQMPSTMPPSTTTGPPTTTKHLQTEAPTTASTTTTTIPHQEQEEDT. Residues 403 to 440 form the EGF-like domain; sequence EDTLCPPQTCLNGGSCHLDPTGQLECECPPGFQGTYCE. 3 disulfides stabilise this stretch: Cys407/Cys418, Cys412/Cys428, and Cys430/Cys439. The Fibronectin type-III domain maps to 455–543; it reads EQVKIIEVTV…EEDLCTETHT (89 aa). Asn518 and Asn561 each carry an N-linked (GlcNAc...) asparagine glycan. A helical membrane pass occupies residues 564-584; the sequence is LVLVPAVAAGILLSAAVAAAA. Residues 585–661 are Cytoplasmic-facing; it reads CYARRRKGKG…PTGRLPHSYF (77 aa). The segment at 591-661 is disordered; that stretch reads KGKGHSVEDG…PTGRLPHSYF (71 aa). A compositionally biased stretch (basic and acidic residues) spans 606 to 623; the sequence is DGVKKGLDGKGEVKKLSE.

The protein resides in the membrane. In terms of biological role, may act as an inhibitor of TGF-beta signaling. The sequence is that of Vasorin (vasn) from Xenopus tropicalis (Western clawed frog).